Consider the following 290-residue polypeptide: Nucleoid occlusion protein (290 aa).

A DNA-binding region (H-T-H motif) is located at residues 153-172 (EALAQRLGKGQSTIANKLRL).

This sequence belongs to the ParB family.

It localises to the cytoplasm. The protein resides in the nucleoid. In terms of biological role, effects nucleoid occlusion by binding relatively nonspecifically to DNA and preventing the assembly of the division machinery in the vicinity of the nucleoid, especially under conditions that disturb the cell cycle. It helps to coordinate cell division and chromosome segregation by preventing the formation of the Z ring through the nucleoid, which would cause chromosome breakage. In Bacillus cereus (strain G9842), this protein is Nucleoid occlusion protein.